Reading from the N-terminus, the 278-residue chain is tRNA pseudouridine synthase A (278 aa).

Aspartate 61 serves as the catalytic Nucleophile. Residue tyrosine 119 coordinates substrate.

Belongs to the tRNA pseudouridine synthase TruA family. Homodimer.

The enzyme catalyses uridine(38/39/40) in tRNA = pseudouridine(38/39/40) in tRNA. Functionally, formation of pseudouridine at positions 38, 39 and 40 in the anticodon stem and loop of transfer RNAs. This chain is tRNA pseudouridine synthase A, found in Oleidesulfovibrio alaskensis (strain ATCC BAA-1058 / DSM 17464 / G20) (Desulfovibrio alaskensis).